The sequence spans 364 residues: Chaperone protein DnaJ (364 aa).

One can recognise a J domain in the interval 4 to 69; sequence DYYEILGLSK…NKKAKYDRFG (66 aa). The CR-type zinc finger occupies 135-213; that stretch reads GYKNNINITR…CKGKGRITNQ (79 aa). Residues C148, C151, C165, C168, C187, C190, C201, and C204 each coordinate Zn(2+). CXXCXGXG motif repeat units follow at residues 148-155, 165-172, 187-194, and 201-208; these read CHSCLGKK, CNMCNGSG, CSKCYGEG, and CKSCKGKG.

The protein belongs to the DnaJ family. As to quaternary structure, homodimer. Requires Zn(2+) as cofactor.

Its subcellular location is the cytoplasm. In terms of biological role, participates actively in the response to hyperosmotic and heat shock by preventing the aggregation of stress-denatured proteins and by disaggregating proteins, also in an autonomous, DnaK-independent fashion. Unfolded proteins bind initially to DnaJ; upon interaction with the DnaJ-bound protein, DnaK hydrolyzes its bound ATP, resulting in the formation of a stable complex. GrpE releases ADP from DnaK; ATP binding to DnaK triggers the release of the substrate protein, thus completing the reaction cycle. Several rounds of ATP-dependent interactions between DnaJ, DnaK and GrpE are required for fully efficient folding. Also involved, together with DnaK and GrpE, in the DNA replication of plasmids through activation of initiation proteins. This is Chaperone protein DnaJ from Borrelia garinii subsp. bavariensis (strain ATCC BAA-2496 / DSM 23469 / PBi) (Borreliella bavariensis).